Here is a 188-residue protein sequence, read N- to C-terminus: Adenine phosphoribosyltransferase (188 aa).

It belongs to the purine/pyrimidine phosphoribosyltransferase family. Homodimer.

It is found in the cytoplasm. The enzyme catalyses AMP + diphosphate = 5-phospho-alpha-D-ribose 1-diphosphate + adenine. It participates in purine metabolism; AMP biosynthesis via salvage pathway; AMP from adenine: step 1/1. In terms of biological role, catalyzes a salvage reaction resulting in the formation of AMP, that is energically less costly than de novo synthesis. This is Adenine phosphoribosyltransferase from Paraburkholderia phytofirmans (strain DSM 17436 / LMG 22146 / PsJN) (Burkholderia phytofirmans).